A 237-amino-acid chain; its full sequence is Large ribosomal subunit protein uL1 (237 aa).

Belongs to the universal ribosomal protein uL1 family. Part of the 50S ribosomal subunit.

Functionally, binds directly to 23S rRNA. The L1 stalk is quite mobile in the ribosome, and is involved in E site tRNA release. Its function is as follows. Protein L1 is also a translational repressor protein, it controls the translation of the L11 operon by binding to its mRNA. This Chloroflexus aurantiacus (strain ATCC 29364 / DSM 637 / Y-400-fl) protein is Large ribosomal subunit protein uL1.